Here is a 249-residue protein sequence, read N- to C-terminus: Putative TrmH family tRNA/rRNA methyltransferase (249 aa).

S-adenosyl-L-methionine-binding residues include Gly-196, Ile-216, and Leu-225.

This sequence belongs to the class IV-like SAM-binding methyltransferase superfamily. RNA methyltransferase TrmH family.

This chain is Putative TrmH family tRNA/rRNA methyltransferase, found in Staphylococcus saprophyticus subsp. saprophyticus (strain ATCC 15305 / DSM 20229 / NCIMB 8711 / NCTC 7292 / S-41).